The following is a 440-amino-acid chain: Xaa-Pro dipeptidase (440 aa).

Positions 244, 255, 335, 380, and 419 each coordinate Mn(2+).

The protein belongs to the peptidase M24B family. Bacterial-type prolidase subfamily. The cofactor is Mn(2+).

The enzyme catalyses Xaa-L-Pro dipeptide + H2O = an L-alpha-amino acid + L-proline. Splits dipeptides with a prolyl residue in the C-terminal position. The sequence is that of Xaa-Pro dipeptidase from Shewanella baltica (strain OS185).